Reading from the N-terminus, the 382-residue chain is Alkanesulfonate monooxygenase (382 aa).

Belongs to the SsuD family.

It carries out the reaction an alkanesulfonate + FMNH2 + O2 = an aldehyde + FMN + sulfite + H2O + 2 H(+). In terms of biological role, catalyzes the desulfonation of aliphatic sulfonates. This is Alkanesulfonate monooxygenase from Pseudomonas putida (strain GB-1).